A 387-amino-acid polypeptide reads, in one-letter code: Synaptotagmin-8 (387 aa).

The Extracellular segment spans residues 1 to 34 (MGHPPVSPSAPAPAGTTAIPGLIPDLVAGTPWPR). A helical; Signal-anchor for type III membrane protein membrane pass occupies residues 35 to 55 (WALIAGALAAGVLLVSCLLCA). The Cytoplasmic segment spans residues 56-387 (ACCCCRRHRK…LRLRLPLPHS (332 aa)). Residues 70–99 (KESVGLGSARGTTTTHLVQPDVDGLESSPG) are disordered. C2 domains follow at residues 103 to 219 (QWGC…EHWY) and 231 to 346 (QVGE…QHWA).

The protein belongs to the synaptotagmin family. As to quaternary structure, homodimer or homooligomer. Homodimerization and homooligomerization do not depend on Ca(2+). Interacts with SYNCRIP isoform 2 C-terminus. Binds inositol 1,3,4,5-tetrakisphosphate (IP4). Binds to AP2 in a Ca(2+)-independent manner. Interacts with STX1A, STX1B and STX2; the interaction is Ca(2+)-dependent.

The protein resides in the cell membrane. It is found in the cytoplasmic vesicle. The protein localises to the secretory vesicle. It localises to the acrosome. In terms of biological role, involved in the trafficking and exocytosis of secretory vesicles in non-neuronal tissues. Mediates Ca(2+)-regulation of exocytosis acrosomal reaction in sperm. May mediate Ca(2+)-regulation of exocytosis in insulin secreted cells. This chain is Synaptotagmin-8 (SYT8), found in Homo sapiens (Human).